A 274-amino-acid polypeptide reads, in one-letter code: Outer surface protein A (274 aa).

An N-terminal signal peptide occupies residues 1–16 (MKKYLLGIGLILALIA). Cysteine 17 is lipidated: N-palmitoyl cysteine. Cysteine 17 carries S-diacylglycerol cysteine lipidation.

The protein belongs to the OspA lipoprotein family.

It localises to the cell outer membrane. The protein resides in the cell surface. In Borreliella burgdorferi (Lyme disease spirochete), this protein is Outer surface protein A.